Consider the following 1958-residue polypeptide: Sodium channel protein type 10 subunit alpha (1958 aa).

Residues 1 to 125 are Cytoplasmic-facing; the sequence is MEFPFGSVGT…FNLIRRTAIK (125 aa). Residues 27–54 are disordered; sequence QIAAHRAAKKGRPKQRGQKDKSEKPRPQ. Residues 32–42 show a composition bias toward basic residues; the sequence is RAAKKGRPKQR. The span at 43 to 54 shows a compositional bias: basic and acidic residues; the sequence is GQKDKSEKPRPQ. An I repeat occupies 116 to 404; sequence FNLIRRTAIK…VTMAYEEQSQ (289 aa). A helical membrane pass occupies residues 126–149; it reads VSVHSWFSIFITVTILVNCVCMTR. The Extracellular segment spans residues 150 to 154; that stretch reads TDLPE. Residues 155-174 traverse the membrane as a helical segment; it reads KLEYAFTVVYTFEALIKILA. Residues 175–187 lie on the Cytoplasmic side of the membrane; the sequence is RGFCLNEFTYLRD. A helical membrane pass occupies residues 188-206; it reads PWNWLDFSVITLAYVGAAI. Topologically, residues 207–212 are extracellular; the sequence is DLRGIS. A helical; Voltage-sensor membrane pass occupies residues 213-232; it reads GLRTFRVLRALKTVSVIPGL. The Cytoplasmic segment spans residues 233 to 248; the sequence is KVIVGALIHSVRKLAD. The chain crosses the membrane as a helical span at residues 249–272; sequence VTILTVFCLSVFALVGLQLFKGNL. At 273-340 the chain is on the extracellular side; sequence KNKCIKNGTD…PDFNYTSFDS (68 aa). Residues C276 and C318 are joined by a disulfide bond. N279, N288, N311, and N334 each carry an N-linked (GlcNAc...) asparagine glycan. Residues 341 to 365 constitute an intramembrane region (pore-forming); that stretch reads FAWAFLSLFRLMTQDSWERLYQQTL. The Extracellular segment spans residues 366 to 372; it reads RASGKMY. The chain crosses the membrane as a helical span at residues 373-398; it reads MVFFVLVIFLGSFYLVNLILAVVTMA. Residues 399 to 658 lie on the Cytoplasmic side of the membrane; the sequence is YEEQSQATIA…KWKKFKMVLF (260 aa). A phosphoserine mark is found at S440, S443, S466, and S478. 2 disordered regions span residues 444 to 483 and 539 to 583; these read HNGS…PYNQ and GRGA…APEG. Residues 549-560 show a composition bias toward pro residues; the sequence is PRSPLPQSPNPG. A phosphoserine mark is found at S611 and S614. The II repeat unit spans residues 646-910; it reads CCPKWKKFKM…EDDGEVNNLQ (265 aa). A helical membrane pass occupies residues 659-683; the sequence is ELVTDPFAELTITLCIVVNTVFMAM. Over 684 to 694 the chain is Extracellular; the sequence is EHYPMTDAFDA. Residues 695–718 traverse the membrane as a helical segment; it reads MLQAGNIVFTVFFTMEMAFKIIAF. At 719–726 the chain is on the cytoplasmic side; that stretch reads DPYYYFQK. The helical transmembrane segment at 727–746 threads the bilayer; it reads KWNIFDCVIVTVSLLELSTS. The Extracellular portion of the chain corresponds to 747–752; it reads KKGSLS. The helical; Voltage-sensor transmembrane segment at 753–772 threads the bilayer; the sequence is VLRTFRLLRVFKLAKSWPTL. Residues 773 to 788 lie on the Cytoplasmic side of the membrane; sequence NMLIKIIGNSVGALGN. Residues 789 to 809 form a helical membrane-spanning segment; sequence LTFILAIIVFIFALVGKQLLS. Residues 810–833 lie on the Extracellular side of the membrane; that stretch reads ENYGCRRDGISVWNGERLRWHMCD. The pore-forming intramembrane region spans 834–854; it reads FFHSFLVVFRILCGEWIENMW. Residues 855–863 lie on the Extracellular side of the membrane; sequence VCMEVSQDY. C856 and C865 are oxidised to a cystine. A helical transmembrane segment spans residues 864–889; sequence ICLTLFLTVMVLGNLVVLNLFIALLL. Over 890–1148 the chain is Cytoplasmic; the sequence is NSFSADNLTA…GWQVRKTCYR (259 aa). The interval 1006–1094 is disordered; that stretch reads DLDELEEDVE…SEGSTVDCPD (89 aa). Polar residues predominate over residues 1017-1038; that stretch reads ASQSSWQEESPKGQQELLQQVQ. The stretch at 1141–1450 is one III repeat; it reads QVRKTCYRIV…KKYYNAMKKL (310 aa). The chain crosses the membrane as a helical span at residues 1149–1172; the sequence is IVEHSWFESFIIFMILLSSGALAF. The Extracellular segment spans residues 1173–1185; that stretch reads EDNYLEEKPRVKS. The chain crosses the membrane as a helical span at residues 1186 to 1211; the sequence is VLEYTDRVFTFIFVFEMLLKWVAYGF. Over 1212–1217 the chain is Cytoplasmic; the sequence is KKYFTN. A helical membrane pass occupies residues 1218 to 1239; sequence AWCWLDFLIVNISLTSLIAKIL. Topologically, residues 1240–1243 are extracellular; the sequence is EYSD. Residues 1244–1265 traverse the membrane as a helical; Voltage-sensor segment; sequence VASIKALRTLRALRPLRALSRF. Topologically, residues 1266-1284 are cytoplasmic; sequence EGMRVVVDALVGAIPSIMN. Residues 1285 to 1312 traverse the membrane as a helical segment; the sequence is VLLVCLIFWLIFSIMGVNLFAGKFSRCV. Residues 1313–1354 lie on the Extracellular side of the membrane; it reads DTRSNPFSVVNSTFVTNKSDCYNQNNTGHFFWVNVKVNFDNV. N-linked (GlcNAc...) asparagine glycans are attached at residues N1323, N1329, and N1337. An intramembrane region (pore-forming) is located at residues 1355–1376; it reads AMGYLALLQVATFKGWMDIMYA. The Extracellular segment spans residues 1377 to 1392; sequence AVDSRDINSQPNWEES. A helical membrane pass occupies residues 1393–1419; the sequence is LYMYLYFVVFIIFGGFFTLNLFVGVII. Over 1420–1472 the chain is Cytoplasmic; sequence DNFNQQKKKLGGQDIFMTEEQKKYYNAMKKLGSKKPQKPIPRPLNKYQGFVFD. The residue at position 1452 (S1452) is a Phosphoserine; by PKC. One copy of the IV repeat lies at 1459–1758; it reads IPRPLNKYQG…WEKFDPEATQ (300 aa). A helical transmembrane segment spans residues 1473 to 1496; it reads IVTRQAFDIIIMALICLNMITMMV. Residues 1497–1507 lie on the Extracellular side of the membrane; sequence ETDNQSEEKTK. N-linked (GlcNAc...) asparagine glycosylation is present at N1500. A helical transmembrane segment spans residues 1508-1531; the sequence is VLGRINQFFVAVFTGECVMKMFAL. The Cytoplasmic segment spans residues 1532–1537; sequence RQYYFT. A helical membrane pass occupies residues 1538-1561; that stretch reads NGWNVFDFIVVILSISSLLFSAIL. Residues 1562 to 1573 lie on the Extracellular side of the membrane; that stretch reads SSLESYFSPTLL. The chain crosses the membrane as a helical; Voltage-sensor span at residues 1574 to 1595; that stretch reads RVIRLARIGRILRLIRAAKGIR. The Cytoplasmic portion of the chain corresponds to 1596-1610; the sequence is TLLFALMMSLPALFN. The chain crosses the membrane as a helical span at residues 1611–1633; the sequence is IGLLLFLVMFIYSIFGMASFANV. The Extracellular segment spans residues 1634–1647; it reads IDEAGIDDMFNFKT. An intramembrane region (pore-forming) is located at residues 1648–1670; it reads FGNSMLCLFQITTSAGWDGLLSP. Over 1671 to 1698 the chain is Extracellular; it reads ILNTGPPYCDPNRPNSNGSKGNCGSPAV. Residue N1687 is glycosylated (N-linked (GlcNAc...) asparagine). A helical membrane pass occupies residues 1699 to 1723; that stretch reads GILFFTTYIIISFLIVVNMYIAVIL. Residues 1724–1958 lie on the Cytoplasmic side of the membrane; the sequence is ENFNVATEES…AKEGKSPGPQ (235 aa). The region spanning 1852–1881 is the IQ domain; that stretch reads EDISATIIQKAYRNYMLQRSLMLSNPLHVP. The tract at residues 1901 to 1958 is disordered; sequence NDNGGLPDKSETASATSFPPSYDSVTRGLSDRANISTSSSMQNEDEVTAKEGKSPGPQ. The segment covering 1933-1942 has biased composition (polar residues); that stretch reads ANISTSSSMQ. The span at 1947–1958 shows a compositional bias: basic and acidic residues; the sequence is VTAKEGKSPGPQ.

This sequence belongs to the sodium channel (TC 1.A.1.10) family. Nav1.8/SCN10A subfamily. As to quaternary structure, the channel consists of an ion conducting pore forming alpha-subunit regulated by one or more associated auxiliary subunits SCN1B, SCN2B and SCN3B; electrophysiological properties may vary depending on the type of the associated beta subunits. Found in a number of complexes with PRX, DYNLT1 and PDZD2. Interacts with proteins such as FSTL1, PRX, DYNLT1, PDZD2, S100A10 and many others. Interacts with NEDD4 and NEDD4L. Ubiquitinated by NEDD4L; which promotes its endocytosis. Post-translationally, phosphorylation at Ser-1452 by PKC in a highly conserved cytoplasmic loop slows inactivation of the sodium channel and reduces peak sodium currents. In terms of processing, lacks the cysteine which covalently binds the conotoxin GVIIJ. This cysteine (position 815) is speculated in other sodium channel subunits alpha to be implied in covalent binding with the sodium channel subunit beta-2 or beta-4. As to expression, expressed in dorsal root ganglion and trigeminal ganglion.

The protein localises to the cell membrane. The enzyme catalyses Na(+)(in) = Na(+)(out). Its function is as follows. Tetrodotoxin-resistant channel that mediates the voltage-dependent sodium ion permeability of excitable membranes. Assuming opened or closed conformations in response to the voltage difference across the membrane, the protein forms a sodium-selective channel through which sodium ions may pass in accordance with their electrochemical gradient. Plays a role in neuropathic pain mechanisms. The chain is Sodium channel protein type 10 subunit alpha from Mus musculus (Mouse).